We begin with the raw amino-acid sequence, 314 residues long: NADH-ubiquinone oxidoreductase chain 1 (314 aa).

8 helical membrane-spanning segments follow: residues 5–25 (IMPL…VAFL), 78–98 (FSPV…PYLI), 105–125 (LGVL…MIAG), 152–172 (ALIL…SFYF), 176–196 (YVWF…SCLA), 227–247 (LIFL…VVIF), 251–271 (DIYS…FIWV), and 294–314 (LSLN…SLLF).

It belongs to the complex I subunit 1 family.

Its subcellular location is the mitochondrion inner membrane. The enzyme catalyses a ubiquinone + NADH + 5 H(+)(in) = a ubiquinol + NAD(+) + 4 H(+)(out). Its function is as follows. Core subunit of the mitochondrial membrane respiratory chain NADH dehydrogenase (Complex I) that is believed to belong to the minimal assembly required for catalysis. Complex I functions in the transfer of electrons from NADH to the respiratory chain. The immediate electron acceptor for the enzyme is believed to be ubiquinone. This is NADH-ubiquinone oxidoreductase chain 1 (mt:ND1) from Anopheles gambiae (African malaria mosquito).